The sequence spans 400 residues: MKILVLNAGSSSLKFQLFDMEDESVMAKGIVERIGLDKPFLSYSKGTDKIKFDKEEPINHKDALQWVLNTLTSHEYGVITTLQEIGAVGHRVVHGGEEFTGSVLITEEVIEALERNKNLAPLHNPPNLTGIYATKAVLPEVPMVGVFDTAFHATMPERAYLYALPIELYEKYKVRRYGFHGTSHRYVAMEAARRLGKTLSELRIISAHLGNGASVCAIQGGKSIDTSMGFTPLEGLVMGTRSGDLDPAIPIWMMRELGMSFDEVDNLLNKKSGVFGLVRGRSFDMRDIEDWMAAGDEEAKKAMEVYCYRLKKYIGGYAAVMGGVDVLIFTAGVGENSPIVREMVCEGLEFLGIKLDKEKNNSRGDAIISAADSKVVVMSIKTNEELMIARDTYEIVRGLT.

Mg(2+) is bound at residue Asn-7. Residue Lys-14 participates in ATP binding. Arg-91 lines the substrate pocket. Catalysis depends on Asp-148, which acts as the Proton donor/acceptor. ATP-binding positions include His-208–Gly-212, Asp-284–Arg-286, and Gly-332–Asn-336. Glu-384 contributes to the Mg(2+) binding site.

It belongs to the acetokinase family. Homodimer. Mg(2+) is required as a cofactor. Requires Mn(2+) as cofactor.

The protein resides in the cytoplasm. The catalysed reaction is acetate + ATP = acetyl phosphate + ADP. Its pathway is metabolic intermediate biosynthesis; acetyl-CoA biosynthesis; acetyl-CoA from acetate: step 1/2. Its function is as follows. Catalyzes the formation of acetyl phosphate from acetate and ATP. Can also catalyze the reverse reaction. This Coprothermobacter proteolyticus (strain ATCC 35245 / DSM 5265 / OCM 4 / BT) protein is Acetate kinase.